The following is a 303-amino-acid chain: Elongation factor Ts (303 aa).

The involved in Mg(2+) ion dislocation from EF-Tu stretch occupies residues 80-83; that stretch reads TDFV.

This sequence belongs to the EF-Ts family.

It is found in the cytoplasm. Associates with the EF-Tu.GDP complex and induces the exchange of GDP to GTP. It remains bound to the aminoacyl-tRNA.EF-Tu.GTP complex up to the GTP hydrolysis stage on the ribosome. The sequence is that of Elongation factor Ts from Clostridium botulinum (strain Eklund 17B / Type B).